Consider the following 342-residue polypeptide: Biotin synthase (342 aa).

Residues 63–290 (NTVQLSTLLS…GAMVRLSAGR (228 aa)) form the Radical SAM core domain. Cys78, Cys82, and Cys85 together coordinate [4Fe-4S] cluster. [2Fe-2S] cluster contacts are provided by Cys122, Cys153, Cys213, and Arg285.

It belongs to the radical SAM superfamily. Biotin synthase family. In terms of assembly, homodimer. The cofactor is [4Fe-4S] cluster. Requires [2Fe-2S] cluster as cofactor.

The enzyme catalyses (4R,5S)-dethiobiotin + (sulfur carrier)-SH + 2 reduced [2Fe-2S]-[ferredoxin] + 2 S-adenosyl-L-methionine = (sulfur carrier)-H + biotin + 2 5'-deoxyadenosine + 2 L-methionine + 2 oxidized [2Fe-2S]-[ferredoxin]. The protein operates within cofactor biosynthesis; biotin biosynthesis; biotin from 7,8-diaminononanoate: step 2/2. In terms of biological role, catalyzes the conversion of dethiobiotin (DTB) to biotin by the insertion of a sulfur atom into dethiobiotin via a radical-based mechanism. The protein is Biotin synthase of Cupriavidus pinatubonensis (strain JMP 134 / LMG 1197) (Cupriavidus necator (strain JMP 134)).